Consider the following 236-residue polypeptide: Small ribosomal subunit protein uS2c (236 aa).

This sequence belongs to the universal ribosomal protein uS2 family.

It localises to the plastid. The protein localises to the chloroplast. The chain is Small ribosomal subunit protein uS2c (rps2) from Chaetosphaeridium globosum (Charophycean green alga).